We begin with the raw amino-acid sequence, 227 residues long: MRIDIVTIFPTFFDVLDISLLGKARQTGRIALGVHDLRDHTHDRHRTVDDTPYGGGAGMVMKPGPWGEALDGVLDGAEDPVVIFPSPAGEPFTQAMARELAGEQHLVFGCGRYEGIDQRVFDDAASHARVRLVSLGDYVLNGGEVATMAMIEAVGRLIPGVVGNPESLVQESHGDGLLEYPSYTKPAEWRGRAVPPVLLSGNHGAIAAWRREQSVARTERVRPDLLP.

S-adenosyl-L-methionine contacts are provided by residues glycine 111 and 135–140 (LGDYVL).

Belongs to the RNA methyltransferase TrmD family. Homodimer.

Its subcellular location is the cytoplasm. The catalysed reaction is guanosine(37) in tRNA + S-adenosyl-L-methionine = N(1)-methylguanosine(37) in tRNA + S-adenosyl-L-homocysteine + H(+). Specifically methylates guanosine-37 in various tRNAs. The chain is tRNA (guanine-N(1)-)-methyltransferase from Leifsonia xyli subsp. xyli (strain CTCB07).